We begin with the raw amino-acid sequence, 287 residues long: 4-hydroxybenzoate octaprenyltransferase (287 aa).

The next 6 helical transmembrane spans lie at 41–61 (VSLL…GCAI), 92–112 (VALA…LNAL), 133–153 (FFAI…PMAF), 160–180 (VPLL…AYDT), 197–217 (TSAL…YAVT), and 267–287 (NNWL…AQAF).

The protein belongs to the UbiA prenyltransferase family. The cofactor is Mg(2+).

The protein resides in the cell inner membrane. The catalysed reaction is all-trans-octaprenyl diphosphate + 4-hydroxybenzoate = 4-hydroxy-3-(all-trans-octaprenyl)benzoate + diphosphate. It functions in the pathway cofactor biosynthesis; ubiquinone biosynthesis. Its function is as follows. Catalyzes the prenylation of para-hydroxybenzoate (PHB) with an all-trans polyprenyl group. Mediates the second step in the final reaction sequence of ubiquinone-8 (UQ-8) biosynthesis, which is the condensation of the polyisoprenoid side chain with PHB, generating the first membrane-bound Q intermediate 3-octaprenyl-4-hydroxybenzoate. The sequence is that of 4-hydroxybenzoate octaprenyltransferase from Paraburkholderia phymatum (strain DSM 17167 / CIP 108236 / LMG 21445 / STM815) (Burkholderia phymatum).